We begin with the raw amino-acid sequence, 259 residues long: Large ribosomal subunit protein uL4 (259 aa).

The tract at residues 47-67 (WGTDPMAGKRTTAESFGSGRG) is disordered.

It belongs to the universal ribosomal protein uL4 family. As to quaternary structure, part of the 50S ribosomal subunit.

Its function is as follows. One of the primary rRNA binding proteins, this protein initially binds near the 5'-end of the 23S rRNA. It is important during the early stages of 50S assembly. It makes multiple contacts with different domains of the 23S rRNA in the assembled 50S subunit and ribosome. Forms part of the polypeptide exit tunnel. The chain is Large ribosomal subunit protein uL4 from Methanosphaera stadtmanae (strain ATCC 43021 / DSM 3091 / JCM 11832 / MCB-3).